Reading from the N-terminus, the 536-residue chain is Protein ST7 homolog (536 aa).

The next 2 membrane-spanning stretches (helical) occupy residues 3–23 (CSWTFLWLLWIALVAVLLFAL) and 49–69 (FYVALTGTSSLVSGIILIFEW). Positions 191–218 (LAEEESETVSQAENLLRRALRAIESTLN) form a coiled coil. A helical membrane pass occupies residues 465 to 485 (TLMMLLQTFICLAICILAVLA).

It belongs to the ST7 family.

The protein localises to the membrane. This chain is Protein ST7 homolog, found in Caenorhabditis elegans.